The chain runs to 236 residues: Biosynthetic peptidoglycan transglycosylase (236 aa).

The helical transmembrane segment at 12 to 31 threads the bilayer; that stretch reads ALLWFAAGSIAVVLVLRWVP.

Belongs to the glycosyltransferase 51 family.

The protein resides in the cell inner membrane. The enzyme catalyses [GlcNAc-(1-&gt;4)-Mur2Ac(oyl-L-Ala-gamma-D-Glu-L-Lys-D-Ala-D-Ala)](n)-di-trans,octa-cis-undecaprenyl diphosphate + beta-D-GlcNAc-(1-&gt;4)-Mur2Ac(oyl-L-Ala-gamma-D-Glu-L-Lys-D-Ala-D-Ala)-di-trans,octa-cis-undecaprenyl diphosphate = [GlcNAc-(1-&gt;4)-Mur2Ac(oyl-L-Ala-gamma-D-Glu-L-Lys-D-Ala-D-Ala)](n+1)-di-trans,octa-cis-undecaprenyl diphosphate + di-trans,octa-cis-undecaprenyl diphosphate + H(+). It functions in the pathway cell wall biogenesis; peptidoglycan biosynthesis. In terms of biological role, peptidoglycan polymerase that catalyzes glycan chain elongation from lipid-linked precursors. This Pseudomonas entomophila (strain L48) protein is Biosynthetic peptidoglycan transglycosylase.